We begin with the raw amino-acid sequence, 249 residues long: ATP synthase subunit a, chloroplastic (249 aa).

Transmembrane regions (helical) follow at residues 40 to 60, 97 to 117, 136 to 156, 201 to 221, and 222 to 242; these read QVLI…VLAV, VPFI…GALL, INTT…AGLS, LVVV…VMFL, and GLFT…AYIG.

It belongs to the ATPase A chain family. As to quaternary structure, F-type ATPases have 2 components, CF(1) - the catalytic core - and CF(0) - the membrane proton channel. CF(1) has five subunits: alpha(3), beta(3), gamma(1), delta(1), epsilon(1). CF(0) has four main subunits: a, b, b' and c.

It is found in the plastid. Its subcellular location is the chloroplast thylakoid membrane. Its function is as follows. Key component of the proton channel; it plays a direct role in the translocation of protons across the membrane. The chain is ATP synthase subunit a, chloroplastic from Draba nemorosa (Woodland whitlowgrass).